A 199-amino-acid polypeptide reads, in one-letter code: Recombination protein RecR (199 aa).

The C4-type zinc-finger motif lies at 58–73 (CQRCNNFSEEAVCQRC). The Toprim domain occupies 81-176 (ATLCVVEMPA…KVSRISRGVP (96 aa)).

It belongs to the RecR family.

May play a role in DNA repair. It seems to be involved in an RecBC-independent recombinational process of DNA repair. It may act with RecF and RecO. The chain is Recombination protein RecR from Azoarcus sp. (strain BH72).